Reading from the N-terminus, the 398-residue chain is MALLRRPTVSTDLENNDTGVNSKPKSHVTIRRAVLEEIGNRVTTRAIQVAKKAQNTKVPVPPTKTTNVNKHPKPTASVKPVQMDVLAPKGPSPTPQDISMKEENLCQAFSDALLCKIEDIDTEDWENPQLCSDYVKDIYQYLRQLEVLQSINPHFLDGRDINGRMRAILVDWLVQVHSKFRLLQETLYMCVAVMDRYLQVQPVSRKKLQLVGITALLLASKYEEMFSPNIEDFVYITDNAYTSSQIREMETLILKELKFELGRPLPLHFLRRASKAGEVDVEQHTLAKYLMELTLVDYDMVHYHPSKVAAAASCLSQKVLGQGKWNLKQQYYTGYTESEVLEVMRHMAKNVVRVNENMTKFTAIKNKYASSKLLKISTIPQLNSKAIQELASPLLGRS.

Disordered stretches follow at residues 1-26 (MALLRRPTVSTDLENNDTGVNSKPKS) and 53-76 (AQNTKVPVPPTKTTNVNKHPKPTA). At Thr-8 the chain carries Phosphothreonine. Positions 8 to 23 (TVSTDLENNDTGVNSK) are enriched in polar residues. The span at 55–69 (NTKVPVPPTKTTNVN) shows a compositional bias: low complexity. A phosphoserine mark is found at Ser-77 and Ser-92. Phosphothreonine is present on Thr-94. 3 positions are modified to phosphoserine: Ser-99, Ser-392, and Ser-398.

It belongs to the cyclin family. Cyclin AB subfamily. As to quaternary structure, interacts with the CDK1 protein kinase to form a serine/threonine kinase holoenzyme complex also known as maturation promoting factor (MPF). The cyclin subunit imparts substrate specificity to the complex.

In terms of biological role, essential for the control of the cell cycle at the G2/M (mitosis) transition. The polypeptide is G2/mitotic-specific cyclin-B2 (CCNB2) (Bos taurus (Bovine)).